A 249-amino-acid polypeptide reads, in one-letter code: 5'-nucleotidase SurE (249 aa).

Asp-8, Asp-9, Ser-39, and Asn-91 together coordinate a divalent metal cation.

The protein belongs to the SurE nucleotidase family. A divalent metal cation serves as cofactor.

The protein localises to the cytoplasm. It catalyses the reaction a ribonucleoside 5'-phosphate + H2O = a ribonucleoside + phosphate. Its function is as follows. Nucleotidase that shows phosphatase activity on nucleoside 5'-monophosphates. This is 5'-nucleotidase SurE from Pseudomonas syringae pv. tomato (strain ATCC BAA-871 / DC3000).